Here is a 470-residue protein sequence, read N- to C-terminus: 3-isopropylmalate dehydratase large subunit (470 aa).

Residues Cys-349, Cys-409, and Cys-412 each coordinate [4Fe-4S] cluster.

The protein belongs to the aconitase/IPM isomerase family. LeuC type 1 subfamily. As to quaternary structure, heterodimer of LeuC and LeuD. [4Fe-4S] cluster serves as cofactor.

The catalysed reaction is (2R,3S)-3-isopropylmalate = (2S)-2-isopropylmalate. It participates in amino-acid biosynthesis; L-leucine biosynthesis; L-leucine from 3-methyl-2-oxobutanoate: step 2/4. In terms of biological role, catalyzes the isomerization between 2-isopropylmalate and 3-isopropylmalate, via the formation of 2-isopropylmaleate. This is 3-isopropylmalate dehydratase large subunit from Campylobacter jejuni subsp. jejuni serotype O:2 (strain ATCC 700819 / NCTC 11168).